We begin with the raw amino-acid sequence, 211 residues long: Orotate phosphoribosyltransferase (211 aa).

5-phospho-alpha-D-ribose 1-diphosphate-binding positions include Arg-103, Lys-107, His-109, and 129–137; that span reads EDLISTGKS. Ser-133 serves as a coordination point for orotate.

It belongs to the purine/pyrimidine phosphoribosyltransferase family. PyrE subfamily. As to quaternary structure, homodimer. Requires Mg(2+) as cofactor.

The enzyme catalyses orotidine 5'-phosphate + diphosphate = orotate + 5-phospho-alpha-D-ribose 1-diphosphate. It participates in pyrimidine metabolism; UMP biosynthesis via de novo pathway; UMP from orotate: step 1/2. Its function is as follows. Catalyzes the transfer of a ribosyl phosphate group from 5-phosphoribose 1-diphosphate to orotate, leading to the formation of orotidine monophosphate (OMP). This chain is Orotate phosphoribosyltransferase, found in Fusobacterium nucleatum subsp. nucleatum (strain ATCC 25586 / DSM 15643 / BCRC 10681 / CIP 101130 / JCM 8532 / KCTC 2640 / LMG 13131 / VPI 4355).